The primary structure comprises 164 residues: Ribosome maturation factor RimM (164 aa).

Residues 90–161 (EGRYYVADII…EIIIKPVKTW (72 aa)) enclose the PRC barrel domain.

This sequence belongs to the RimM family. Binds ribosomal protein uS19.

It localises to the cytoplasm. Functionally, an accessory protein needed during the final step in the assembly of 30S ribosomal subunit, possibly for assembly of the head region. Essential for efficient processing of 16S rRNA. May be needed both before and after RbfA during the maturation of 16S rRNA. It has affinity for free ribosomal 30S subunits but not for 70S ribosomes. This chain is Ribosome maturation factor RimM, found in Clostridium tetani (strain Massachusetts / E88).